The following is a 95-amino-acid chain: Putative pterin-4-alpha-carbinolamine dehydratase (95 aa).

This sequence belongs to the pterin-4-alpha-carbinolamine dehydratase family.

It catalyses the reaction (4aS,6R)-4a-hydroxy-L-erythro-5,6,7,8-tetrahydrobiopterin = (6R)-L-erythro-6,7-dihydrobiopterin + H2O. This is Putative pterin-4-alpha-carbinolamine dehydratase from Nocardia farcinica (strain IFM 10152).